A 314-amino-acid polypeptide reads, in one-letter code: 3'-5' exoribonuclease YhaM (314 aa).

Positions 22 to 90 (SSTKGIASNG…QLKLRNIRPV (69 aa)) form a DNA-binding region, OB. The HD domain maps to 163-279 (HVVSMLNLAK…LHYIDNLDAK (117 aa)).

This sequence belongs to the YhaM family. It depends on Mn(2+) as a cofactor. Requires Co(2+) as cofactor.

In terms of biological role, shows a 3'-5' exoribonuclease activity as well as single-stranded DNA 3'-5'exonuclease activity. Plays a role in the secondary pathway of 23S rRNA 3' end maturation. This Bacillus subtilis (strain 168) protein is 3'-5' exoribonuclease YhaM.